The following is a 451-amino-acid chain: MREAICIHIGQAGCQVGNACWELFCLEHGIQPDGAMPSDKTIGVEDDAFNTFFSETGAGKHVPRAVFLDLEPTVVDEIRTGTYRQLFHPEQLISGKEDAANNYARGHYTIGKEIVDLCLDRIRKLADNCTGLQGFLVYHAVGGGTGSGLGALLLERLSVDYGKKSKLGYTVYPSPQVSTAVVEPYNSVLSTHSLLEHTDVAAMLDNEAIYDLTRANLDIERPTYTNLNRLIGQVVSALTASLRFDGALNVDLTEFQTNLVPYPRIHFVLTTYAPVISAEKAYHEQLSVSEISNAVFEPASMMTKCDPRHGKYMACCLMYRGDVVPKDVNAAVATIKTKRTIQFVDWSPTGFKCGINYQPPTVVPGGDLAKVQRAVCMIANSTAIAEVFARIDHKFDLMYSKRAFVHWYVGEGMEEGEFSEAREDLAALEKDYEEVGAESADMEGEEDVEEY.

Residue Gln-11 participates in GTP binding. Lys-40 bears the N6-acetyllysine mark. GTP is bound by residues Glu-71, Gly-144, Thr-145, Thr-179, Asn-206, and Asn-228. A Mg(2+)-binding site is contributed by Glu-71. The active site involves Glu-254.

The protein belongs to the tubulin family. In terms of assembly, dimer of alpha and beta chains. A typical microtubule is a hollow water-filled tube with an outer diameter of 25 nm and an inner diameter of 15 nM. Alpha-beta heterodimers associate head-to-tail to form protofilaments running lengthwise along the microtubule wall with the beta-tubulin subunit facing the microtubule plus end conferring a structural polarity. Microtubules usually have 13 protofilaments but different protofilament numbers can be found in some organisms and specialized cells. Requires Mg(2+) as cofactor. In terms of processing, undergoes a tyrosination/detyrosination cycle, the cyclic removal and re-addition of a C-terminal tyrosine residue by the enzymes tubulin tyrosine carboxypeptidase (TTCP) and tubulin tyrosine ligase (TTL), respectively. Post-translationally, acetylation of alpha chains at Lys-40 stabilizes microtubules and affects affinity and processivity of microtubule motors. This modification has a role in multiple cellular functions, ranging from cell motility, cell cycle progression or cell differentiation to intracellular trafficking and signaling.

The protein resides in the cytoplasm. It is found in the cytoskeleton. The catalysed reaction is GTP + H2O = GDP + phosphate + H(+). Its function is as follows. Tubulin is the major constituent of microtubules, a cylinder consisting of laterally associated linear protofilaments composed of alpha- and beta-tubulin heterodimers. Microtubules grow by the addition of GTP-tubulin dimers to the microtubule end, where a stabilizing cap forms. Below the cap, tubulin dimers are in GDP-bound state, owing to GTPase activity of alpha-tubulin. The chain is Tubulin alpha chain from Trypanosoma cruzi.